We begin with the raw amino-acid sequence, 207 residues long: Peptidyl-tRNA hydrolase (207 aa).

A tRNA-binding site is contributed by Tyr19. Catalysis depends on His24, which acts as the Proton acceptor. Phe70, Asn72, and Asn118 together coordinate tRNA.

Belongs to the PTH family. Monomer.

The protein localises to the cytoplasm. It catalyses the reaction an N-acyl-L-alpha-aminoacyl-tRNA + H2O = an N-acyl-L-amino acid + a tRNA + H(+). Its function is as follows. Hydrolyzes ribosome-free peptidyl-tRNAs (with 1 or more amino acids incorporated), which drop off the ribosome during protein synthesis, or as a result of ribosome stalling. Catalyzes the release of premature peptidyl moieties from peptidyl-tRNA molecules trapped in stalled 50S ribosomal subunits, and thus maintains levels of free tRNAs and 50S ribosomes. This is Peptidyl-tRNA hydrolase from Synechococcus sp. (strain CC9311).